We begin with the raw amino-acid sequence, 79 residues long: MEKIVKFDLKYDELLKKIPYKYAIPVVVAKRAEAIREYARPFVITDDENYVSIAFMELSLNYIRIKNEEILKALIPKVK.

It belongs to the RNA polymerase subunit omega family. The RNAP catalytic core consists of 2 alpha, 1 beta, 1 beta' and 1 omega subunit. When a sigma factor is associated with the core the holoenzyme is formed, which can initiate transcription.

The catalysed reaction is RNA(n) + a ribonucleoside 5'-triphosphate = RNA(n+1) + diphosphate. Its function is as follows. Promotes RNA polymerase assembly. Latches the N- and C-terminal regions of the beta' subunit thereby facilitating its interaction with the beta and alpha subunits. This chain is DNA-directed RNA polymerase subunit omega (rpoZ), found in Thermotoga maritima (strain ATCC 43589 / DSM 3109 / JCM 10099 / NBRC 100826 / MSB8).